We begin with the raw amino-acid sequence, 390 residues long: 4-hydroxy-3-methylbut-2-en-1-yl diphosphate synthase (flavodoxin) (390 aa).

The [4Fe-4S] cluster site is built by cysteine 281, cysteine 284, cysteine 316, and glutamate 323.

Belongs to the IspG family. It depends on [4Fe-4S] cluster as a cofactor.

The enzyme catalyses (2E)-4-hydroxy-3-methylbut-2-enyl diphosphate + oxidized [flavodoxin] + H2O + 2 H(+) = 2-C-methyl-D-erythritol 2,4-cyclic diphosphate + reduced [flavodoxin]. It functions in the pathway isoprenoid biosynthesis; isopentenyl diphosphate biosynthesis via DXP pathway; isopentenyl diphosphate from 1-deoxy-D-xylulose 5-phosphate: step 5/6. Functionally, converts 2C-methyl-D-erythritol 2,4-cyclodiphosphate (ME-2,4cPP) into 1-hydroxy-2-methyl-2-(E)-butenyl 4-diphosphate. The polypeptide is 4-hydroxy-3-methylbut-2-en-1-yl diphosphate synthase (flavodoxin) (Salinispora arenicola (strain CNS-205)).